A 52-amino-acid chain; its full sequence is DNA import protein CedA2 (52 aa).

The next 2 helical transmembrane spans lie at 1-21 (MKSYLLVSMLLLLNSILVYIY) and 27-47 (ILVSGITVAVIIYIVVKIIFE).

Forms a complex composed of CedA, CedA1 and CedA2.

The protein resides in the cell membrane. Functionally, part of the Ced system, which is involved in DNA import. In Sulfolobus acidocaldarius (strain ATCC 33909 / DSM 639 / JCM 8929 / NBRC 15157 / NCIMB 11770), this protein is DNA import protein CedA2.